The primary structure comprises 157 residues: Crossover junction endodeoxyribonuclease RuvC (157 aa).

Residues Asp-7, Glu-67, and Asp-140 contribute to the active site. Residues Asp-7, Glu-67, and Asp-140 each contribute to the Mg(2+) site.

This sequence belongs to the RuvC family. As to quaternary structure, homodimer which binds Holliday junction (HJ) DNA. The HJ becomes 2-fold symmetrical on binding to RuvC with unstacked arms; it has a different conformation from HJ DNA in complex with RuvA. In the full resolvosome a probable DNA-RuvA(4)-RuvB(12)-RuvC(2) complex forms which resolves the HJ. Requires Mg(2+) as cofactor.

It localises to the cytoplasm. The catalysed reaction is Endonucleolytic cleavage at a junction such as a reciprocal single-stranded crossover between two homologous DNA duplexes (Holliday junction).. The RuvA-RuvB-RuvC complex processes Holliday junction (HJ) DNA during genetic recombination and DNA repair. Endonuclease that resolves HJ intermediates. Cleaves cruciform DNA by making single-stranded nicks across the HJ at symmetrical positions within the homologous arms, yielding a 5'-phosphate and a 3'-hydroxyl group; requires a central core of homology in the junction. The consensus cleavage sequence is 5'-(A/T)TT(C/G)-3'. Cleavage occurs on the 3'-side of the TT dinucleotide at the point of strand exchange. HJ branch migration catalyzed by RuvA-RuvB allows RuvC to scan DNA until it finds its consensus sequence, where it cleaves and resolves the cruciform DNA. This Rickettsia bellii (strain OSU 85-389) protein is Crossover junction endodeoxyribonuclease RuvC.